Consider the following 238-residue polypeptide: Sugar fermentation stimulation protein homolog (238 aa).

It belongs to the SfsA family.

The sequence is that of Sugar fermentation stimulation protein homolog from Haemophilus influenzae (strain 86-028NP).